The chain runs to 293 residues: 2-pyrone-4,6-dicarboxylate hydrolase (293 aa).

Positions 1–20 are disordered; that stretch reads MTNDERILSWNETPSKPRYT. Substrate is bound by residues 29-31, Y47, S75, R122, R128, Y154, and H178; that span reads HCH. Residue D246 is the Proton acceptor of the active site. A substrate-binding site is contributed by N251.

This sequence belongs to the metallo-dependent hydrolases superfamily. PDC hydrolase family. In terms of assembly, monomer.

The enzyme catalyses 2-oxo-2H-pyran-4,6-dicarboxylate + H2O = (1E)-4-oxobut-1-ene-1,2,4-tricarboxylate + H(+). It functions in the pathway secondary metabolite metabolism; lignin degradation. Its activity is regulated as follows. Strongly inhibited by 1 mM Zn(2+) ions. Also inhibited by pyridine-2,4-dicarboxylic acid, 5-hydroxyisophthalic acid and 5,5'-dithiobis(2-nitrobenzoic acid) (Ellman reagent). In terms of biological role, contributes to the degradation of lignin at the level of the protocatechuate 4,5-cleavage pathway. Catalyzes the hydrolysis of 2-pyrone-4,6-dicarboxylate (PDC) to (4E)-oxalomesaconate (OMA). The keto form of OMA can tautomerize into the enol form, 4-carboxy-2-hydroxymuconate (CHM), under certain pH conditions. Also catalyzes the reverse reaction. Is essential for the growth of Sphingobium sp. SYK-6 on vanillate but is not responsible for the growth of this strain on syringate. The polypeptide is 2-pyrone-4,6-dicarboxylate hydrolase (Sphingobium sp. (strain NBRC 103272 / SYK-6)).